Consider the following 550-residue polypeptide: MADVMEQNLLQTAVLNRTSFHFQPQRNWLNDPNAPMYYKGFYHLFYQNNPLAPEFSRTRIIWGHSVSQDMVNWIQLEPALVPSESFDINSCWSGSATILPDGRPVILYTGLDVNNKQQVTVVAEPKDVSDPLLREWVKPKYNPVMVPPSNVPFNCFRDPTEAWKGQDGKWRVLIGAKEKDTEKGMAILYRSDDFVQWTKYPVPLLESEGTGMWECPDFFPVSITGKEGVDTSVNNASVRHVLKASFGGNDCYVIGKYSSETEDFSADYEFTNTSADLRYDHGTFYASKAFFDSVKNRRINWGWVIETDSKEDDFKKGWAGLMTLPREIWMDTSGKKLMQWPIEEINNLRTKSVSLDDCYEFKTGSTFEISGITAAQADVEVTFNLPFLENNPEILDADQVDDATLFDRDSSVGCVYGPFGLLALASSDLSEQTAIFFKVIRRGNGYAVVMCSSEKRSSLRDNIKKSSHGAFLDIDPRHEKISLRCLIDHSIIESYGVGGKTVITSRVYPKLAIGEAAKLYVFNDGENGVIMTSLEAWSMRNAQINSNPTY.

Substrate-binding positions include 28–31, glutamine 47, 92–93, 157–158, and glutamate 214; these read WLND, WS, and RD. Residue aspartate 31 is part of the active site. 2 N-linked (GlcNAc...) asparagine glycosylation sites follow: asparagine 235 and asparagine 272.

The protein belongs to the glycosyl hydrolase 32 family. As to expression, expressed in seedlings and leaves, and, to a lower extent, in flowers and seeds.

Its subcellular location is the secreted. It localises to the extracellular space. The protein resides in the apoplast. It is found in the cell wall. It carries out the reaction Hydrolysis of terminal, non-reducing (2-&gt;1)- and (2-&gt;6)-linked beta-D-fructofuranose residues in fructans.. Functionally, 6 and 1-fructan exohydrolase that can degrade both inulin and levan-type fructans, such as phlein, levan, neokestose, levanbiose, 6-kestose, 1-kestose, inulin, and 1,1-nystose. The polypeptide is Beta-fructofuranosidase, insoluble isoenzyme CWINV6 (CWINV6) (Arabidopsis thaliana (Mouse-ear cress)).